The chain runs to 571 residues: Proline--tRNA ligase (571 aa).

The protein belongs to the class-II aminoacyl-tRNA synthetase family. ProS type 1 subfamily. Homodimer.

Its subcellular location is the cytoplasm. The enzyme catalyses tRNA(Pro) + L-proline + ATP = L-prolyl-tRNA(Pro) + AMP + diphosphate. In terms of biological role, catalyzes the attachment of proline to tRNA(Pro) in a two-step reaction: proline is first activated by ATP to form Pro-AMP and then transferred to the acceptor end of tRNA(Pro). As ProRS can inadvertently accommodate and process non-cognate amino acids such as alanine and cysteine, to avoid such errors it has two additional distinct editing activities against alanine. One activity is designated as 'pretransfer' editing and involves the tRNA(Pro)-independent hydrolysis of activated Ala-AMP. The other activity is designated 'posttransfer' editing and involves deacylation of mischarged Ala-tRNA(Pro). The misacylated Cys-tRNA(Pro) is not edited by ProRS. The sequence is that of Proline--tRNA ligase from Actinobacillus pleuropneumoniae serotype 7 (strain AP76).